We begin with the raw amino-acid sequence, 147 residues long: Large ribosomal subunit protein uL13 (147 aa).

This sequence belongs to the universal ribosomal protein uL13 family. Part of the 50S ribosomal subunit.

In terms of biological role, this protein is one of the early assembly proteins of the 50S ribosomal subunit, although it is not seen to bind rRNA by itself. It is important during the early stages of 50S assembly. The polypeptide is Large ribosomal subunit protein uL13 (Mycobacterium leprae (strain Br4923)).